The sequence spans 470 residues: O-acyltransferase pboC (470 aa).

Catalysis depends on proton acceptor residues histidine 149 and aspartate 386.

This sequence belongs to the plant acyltransferase family. In terms of assembly, monomer.

It participates in secondary metabolite biosynthesis. Functionally, O-acetyltransferase; part of the gene cluster that mediates the biosynthesis of protubonine B, a hydroxylated and diacetylated cyclo-L-Trp-L-Leu derivative. Within the pathway, pboC catalyzes the acetylation of protubonine D at the hydroxy group to produce protubonine C. The first step of the protubonine B synthesis is performed by the nonribosomal peptide synthetase pboA that catalyzes the formation of cyclo-L-Trp-L-Leu by condensing L-Leu with L-Trp. The flavin-dependent monooxygenase pboD is responsible for hydroxylation at C-3 of the indole ring and subsequent formation of the pyrrolidine ring, leadind to protubonine D. Protubonine D is further diacetylated by two acetyltransferases, pboB and pboC, to form the final product protubonine B via protubonine C. The polypeptide is O-acyltransferase pboC (Aspergillus ustus).